Here is a 92-residue protein sequence, read N- to C-terminus: Small ribosomal subunit protein uS19 (92 aa).

It belongs to the universal ribosomal protein uS19 family.

In terms of biological role, protein S19 forms a complex with S13 that binds strongly to the 16S ribosomal RNA. This is Small ribosomal subunit protein uS19 from Shewanella amazonensis (strain ATCC BAA-1098 / SB2B).